A 589-amino-acid chain; its full sequence is GTPase LSG1-2 (589 aa).

Residues 1-26 (MGKSEKTSLGRSLVKHHNHMIQESKD) are disordered. The region spanning 158 to 366 (WRQLWRVLER…LCDCPGLVFP (209 aa)) is the CP-type G domain. Residues 176-180 (DARDP) carry the DARXP motif motif. The interval 206–209 (NKAD) is G4. 206–209 (NKAD) contributes to the GTP binding site. Residues 237-239 (AAT) are G5. The G1 stretch occupies residues 315–322 (GYPNVGKS). Position 318–323 (318–323 (NVGKSS)) interacts with GTP. Residues 341–345 (GKTKH) are G2. Positions 359-362 (DCPG) are G3. Position 362 (Gly362) interacts with GTP. The span at 495 to 509 (GSESDDSAVGDETEN) shows a compositional bias: acidic residues. 2 disordered regions span residues 495–515 (GSES…VPGI) and 534–589 (SKKV…LTMR). The Nuclear localization signal signature appears at 534–541 (SKKVTAKK). The span at 534-558 (SKKVTAKKQTASHKQHKKPQRKKDR) shows a compositional bias: basic residues. Positions 580–589 (PANTGPLTMR) are enriched in polar residues.

This sequence belongs to the TRAFAC class YlqF/YawG GTPase family. In terms of tissue distribution, ubiquitous, with the highest expression in reproductive and strongly dividing tissues.

Its subcellular location is the cytoplasm. The protein localises to the nucleus. Its function is as follows. GTPase involved in ribosome biogenesis. Binds to 23S rRNA and associates with 60S pre-ribosomes. Involved in early cotyledon and leaf development. The polypeptide is GTPase LSG1-2 (Arabidopsis thaliana (Mouse-ear cress)).